The primary structure comprises 375 residues: DNA replication and repair protein RecF (375 aa).

Residue 30–37 (GNNGSGKS) coordinates ATP.

This sequence belongs to the RecF family.

It localises to the cytoplasm. Functionally, the RecF protein is involved in DNA metabolism; it is required for DNA replication and normal SOS inducibility. RecF binds preferentially to single-stranded, linear DNA. It also seems to bind ATP. The polypeptide is DNA replication and repair protein RecF (Hahella chejuensis (strain KCTC 2396)).